Here is a 182-residue protein sequence, read N- to C-terminus: ATP-dependent protease subunit HslV (182 aa).

Thr-10 is an active-site residue. Ala-166, Cys-169, and Ser-172 together coordinate Na(+).

Belongs to the peptidase T1B family. HslV subfamily. In terms of assembly, a double ring-shaped homohexamer of HslV is capped on each side by a ring-shaped HslU homohexamer. The assembly of the HslU/HslV complex is dependent on binding of ATP.

The protein localises to the cytoplasm. It carries out the reaction ATP-dependent cleavage of peptide bonds with broad specificity.. Its activity is regulated as follows. Allosterically activated by HslU binding. Its function is as follows. Protease subunit of a proteasome-like degradation complex believed to be a general protein degrading machinery. The polypeptide is ATP-dependent protease subunit HslV (Rickettsia felis (strain ATCC VR-1525 / URRWXCal2) (Rickettsia azadi)).